A 514-amino-acid chain; its full sequence is 2-isopropylmalate synthase (514 aa).

The 263-residue stretch at leucine 5–leucine 267 folds into the Pyruvate carboxyltransferase domain. Mn(2+) contacts are provided by aspartate 14, histidine 202, histidine 204, and asparagine 238. A regulatory domain region spans residues arginine 394–valine 514.

This sequence belongs to the alpha-IPM synthase/homocitrate synthase family. LeuA type 1 subfamily. Homodimer. Requires Mn(2+) as cofactor.

It localises to the cytoplasm. The enzyme catalyses 3-methyl-2-oxobutanoate + acetyl-CoA + H2O = (2S)-2-isopropylmalate + CoA + H(+). It participates in amino-acid biosynthesis; L-leucine biosynthesis; L-leucine from 3-methyl-2-oxobutanoate: step 1/4. Functionally, catalyzes the condensation of the acetyl group of acetyl-CoA with 3-methyl-2-oxobutanoate (2-ketoisovalerate) to form 3-carboxy-3-hydroxy-4-methylpentanoate (2-isopropylmalate). This Hydrogenovibrio crunogenus (strain DSM 25203 / XCL-2) (Thiomicrospira crunogena) protein is 2-isopropylmalate synthase.